The sequence spans 147 residues: MFNNILVVCVGNICRSPTAERLLQRYHPELKVESAGLGALVGKGADPTAISVAAEHQLSLEGHCARQISRRLCRNYDLILTMEKRHIERLCEMAPEMRGKVMLFGHWDNECEIPDPYRKSRETFAAVYTLLERSARQWAQALNAEQV.

Residue Cys-9 is the Nucleophile of the active site. Residue Arg-15 is part of the active site. The Proton donor role is filled by Asp-115.

This sequence belongs to the low molecular weight phosphotyrosine protein phosphatase family.

The catalysed reaction is O-phospho-L-tyrosyl-[protein] + H2O = L-tyrosyl-[protein] + phosphate. It participates in glycan metabolism; exopolysaccharide biosynthesis. Its function is as follows. Dephosphorylates Wzc. Required for the extracellular polysaccharide colanic acid synthesis. Probably involved in the export of colanic acid from the cell to medium. Involved in protection of cells against contact-dependent growth inhibition (CDI). The chain is Low molecular weight protein-tyrosine-phosphatase Wzb (wzb) from Escherichia coli O157:H7.